Here is an 853-residue protein sequence, read N- to C-terminus: Envelope glycoprotein gp160 (853 aa).

Residues 1-31 form the signal peptide; that stretch reads MRARGIERNCQNWWKWGIMLLGILMTCSAAD. Residues 32 to 681 lie on the Extracellular side of the membrane; the sequence is NLWVTVYYGV…ITQWLWYIKI (650 aa). Cysteines 53 and 73 form a disulfide. 14 N-linked (GlcNAc...) asparagine; by host glycosylation sites follow: Asn-87, Asn-129, Asn-137, Asn-143, Asn-153, Asn-157, Asn-183, Asn-188, Asn-198, Asn-235, Asn-242, Asn-263, Asn-277, and Asn-290. Disulfide bonds link Cys-118–Cys-206, Cys-125–Cys-197, Cys-130–Cys-154, Cys-219–Cys-248, and Cys-229–Cys-240. Residues 130 to 153 are V1; it reads CSDELRNNGTMGNNVTTEEKGMKN. The V2 stretch occupies residues 154–197; sequence CSFNVTTVLKDKKQQVYALFYRLDIVPIDNDSSTNSTNYRLINC. Residues 297 to 329 are V3; it reads CARPYQNTRQRTPIGLGQSLYTTRSRSIIGQAH. A disulfide bridge connects residues Cys-297 and Cys-330. N-linked (GlcNAc...) asparagine; by host glycans are attached at residues Asn-331 and Asn-353. The tract at residues 362-372 is CD4-binding loop; that stretch reads SSGGDPEITTH. Disulfide bonds link Cys-376–Cys-442 and Cys-383–Cys-416. The V4 stretch occupies residues 383–416; that stretch reads CNTSGLFNSTWNISAWNNITESNNSTNTNITLQC. N-linked (GlcNAc...) asparagine; by host glycosylation is found at Asn-384, Asn-390, Asn-394, Asn-400, Asn-405, Asn-406, Asn-411, Asn-445, Asn-458, Asn-459, and Asn-462. 2 V5 regions span residues 457–468 and 460–468; these read INNSTNETFRPG and STNETFRPG. Positions 509–529 are fusion peptide; sequence AIGLGAMFLGFLGAAGSTMGA. The immunosuppression stretch occupies residues 571-589; that stretch reads KQLQARILAVERYLKDQQL. Residues Cys-595 and Cys-601 are joined by a disulfide bond. Residues Asn-608, Asn-613, Asn-622, and Asn-634 are each glycosylated (N-linked (GlcNAc...) asparagine; by host). The stretch at 630 to 664 forms a coiled coil; sequence REIDNYTGLIYSLIEESQTQQEKNEKELLELDKWA. Residues 659–680 form an MPER; binding to GalCer region; that stretch reads ELDKWASLWNWFSITQWLWYIK. A helical transmembrane segment spans residues 682–702; sequence FIMIIGGLIGLRIVFAVLSLV. The Cytoplasmic segment spans residues 703–853; it reads NRVRQGYSPL…IRQGLERSLL (151 aa). Residues 709 to 712 carry the YXXL motif; contains endocytosis signal motif; that stretch reads YSPL. Positions 716–738 are disordered; sequence TLLPAPRGPDRPEGTEEEGGERG. Positions 723 to 738 are enriched in basic and acidic residues; the sequence is GPDRPEGTEEEGGERG. Residues Cys-761 and Cys-834 are each lipidated (S-palmitoyl cysteine; by host). The short motif at 852 to 853 is the Di-leucine internalization motif element; sequence LL.

This sequence belongs to the HIV-1 env protein family. As to quaternary structure, the mature envelope protein (Env) consists of a homotrimer of non-covalently associated gp120-gp41 heterodimers. The resulting complex protrudes from the virus surface as a spike. There seems to be as few as 10 spikes on the average virion. Interacts with host CD4, CCR5 and CXCR4. Gp120 also interacts with the C-type lectins CD209/DC-SIGN and CLEC4M/DC-SIGNR (collectively referred to as DC-SIGN(R)). Gp120 and gp41 interact with GalCer. Gp120 interacts with host ITGA4/ITGB7 complex; on CD4+ T-cells, this interaction results in rapid activation of integrin ITGAL/LFA-1, which facilitates efficient cell-to-cell spreading of HIV-1. Gp120 interacts with cell-associated heparan sulfate; this interaction increases virus infectivity on permissive cells and may be involved in infection of CD4- cells. In terms of assembly, the mature envelope protein (Env) consists of a homotrimer of non-covalently associated gp120-gp41 heterodimers. The resulting complex protrudes from the virus surface as a spike. There seems to be as few as 10 spikes on the average virion. In terms of processing, highly glycosylated by host. The high number of glycan on the protein is reffered to as 'glycan shield' because it contributes to hide protein sequence from adaptive immune system. Post-translationally, palmitoylation of the transmembrane protein and of Env polyprotein (prior to its proteolytic cleavage) is essential for their association with host cell membrane lipid rafts. Palmitoylation is therefore required for envelope trafficking to classical lipid rafts, but not for viral replication. Specific enzymatic cleavages in vivo yield mature proteins. Envelope glycoproteins are synthesized as an inactive precursor that is heavily N-glycosylated and processed likely by host cell furin in the Golgi to yield the mature SU and TM proteins. The cleavage site between SU and TM requires the minimal sequence [KR]-X-[KR]-R. About 2 of the 9 disulfide bonds of gp41 are reduced by P4HB/PDI, following binding to CD4 receptor.

It is found in the virion membrane. The protein resides in the host cell membrane. The protein localises to the host endosome membrane. Oligomerizes in the host endoplasmic reticulum into predominantly trimers. In a second time, gp160 transits in the host Golgi, where glycosylation is completed. The precursor is then proteolytically cleaved in the trans-Golgi and thereby activated by cellular furin or furin-like proteases to produce gp120 and gp41. Functionally, attaches the virus to the host lymphoid cell by binding to the primary receptor CD4. This interaction induces a structural rearrangement creating a high affinity binding site for a chemokine coreceptor like CXCR4 and/or CCR5. Acts as a ligand for CD209/DC-SIGN and CLEC4M/DC-SIGNR, which are respectively found on dendritic cells (DCs), and on endothelial cells of liver sinusoids and lymph node sinuses. These interactions allow capture of viral particles at mucosal surfaces by these cells and subsequent transmission to permissive cells. HIV subverts the migration properties of dendritic cells to gain access to CD4+ T-cells in lymph nodes. Virus transmission to permissive T-cells occurs either in trans (without DCs infection, through viral capture and transmission), or in cis (following DCs productive infection, through the usual CD4-gp120 interaction), thereby inducing a robust infection. In trans infection, bound virions remain infectious over days and it is proposed that they are not degraded, but protected in non-lysosomal acidic organelles within the DCs close to the cell membrane thus contributing to the viral infectious potential during DCs' migration from the periphery to the lymphoid tissues. On arrival at lymphoid tissues, intact virions recycle back to DCs' cell surface allowing virus transmission to CD4+ T-cells. Its function is as follows. Acts as a class I viral fusion protein. Under the current model, the protein has at least 3 conformational states: pre-fusion native state, pre-hairpin intermediate state, and post-fusion hairpin state. During fusion of viral and target intracellular membranes, the coiled coil regions (heptad repeats) assume a trimer-of-hairpins structure, positioning the fusion peptide in close proximity to the C-terminal region of the ectodomain. The formation of this structure appears to drive apposition and subsequent fusion of viral and target cell membranes. Complete fusion occurs in host cell endosomes and is dynamin-dependent, however some lipid transfer might occur at the plasma membrane. The virus undergoes clathrin-dependent internalization long before endosomal fusion, thus minimizing the surface exposure of conserved viral epitopes during fusion and reducing the efficacy of inhibitors targeting these epitopes. Membranes fusion leads to delivery of the nucleocapsid into the cytoplasm. This chain is Envelope glycoprotein gp160, found in Human immunodeficiency virus type 1 group M subtype D (isolate ELI) (HIV-1).